We begin with the raw amino-acid sequence, 517 residues long: GMP synthase [glutamine-hydrolyzing] (517 aa).

One can recognise a Glutamine amidotransferase type-1 domain in the interval 11-202; the sequence is KIIVLDYGSQ…AFGVCGAQDN (192 aa). Residue Cys-88 is the Nucleophile of the active site. Active-site residues include His-176 and Glu-178. Residues 203 to 392 form the GMPS ATP-PPase domain; that stretch reads WTMNDFIDMQ…LGMPYELVWR (190 aa). Position 230 to 236 (230 to 236) interacts with ATP; sequence SGGVDSS.

Homodimer.

It carries out the reaction XMP + L-glutamine + ATP + H2O = GMP + L-glutamate + AMP + diphosphate + 2 H(+). It functions in the pathway purine metabolism; GMP biosynthesis; GMP from XMP (L-Gln route): step 1/1. Catalyzes the synthesis of GMP from XMP. The chain is GMP synthase [glutamine-hydrolyzing] from Latilactobacillus sakei subsp. sakei (strain 23K) (Lactobacillus sakei subsp. sakei).